A 198-amino-acid chain; its full sequence is Segregation and condensation protein B (198 aa).

Belongs to the ScpB family. As to quaternary structure, homodimer. Homodimerization may be required to stabilize the binding of ScpA to the Smc head domains. Component of a cohesin-like complex composed of ScpA, ScpB and the Smc homodimer, in which ScpA and ScpB bind to the head domain of Smc. The presence of the three proteins is required for the association of the complex with DNA.

It is found in the cytoplasm. In terms of biological role, participates in chromosomal partition during cell division. May act via the formation of a condensin-like complex containing Smc and ScpA that pull DNA away from mid-cell into both cell halves. This chain is Segregation and condensation protein B, found in Acetivibrio thermocellus (strain ATCC 27405 / DSM 1237 / JCM 9322 / NBRC 103400 / NCIMB 10682 / NRRL B-4536 / VPI 7372) (Clostridium thermocellum).